The chain runs to 375 residues: 23S rRNA (uracil(747)-C(5))-methyltransferase RlmC (375 aa).

4 residues coordinate [4Fe-4S] cluster: Cys3, Cys11, Cys14, and Cys87. S-adenosyl-L-methionine is bound by residues Gln212, Phe241, Glu262, and Asn307. Cys334 serves as the catalytic Nucleophile.

The protein belongs to the class I-like SAM-binding methyltransferase superfamily. RNA M5U methyltransferase family. RlmC subfamily.

It carries out the reaction uridine(747) in 23S rRNA + S-adenosyl-L-methionine = 5-methyluridine(747) in 23S rRNA + S-adenosyl-L-homocysteine + H(+). Functionally, catalyzes the formation of 5-methyl-uridine at position 747 (m5U747) in 23S rRNA. The protein is 23S rRNA (uracil(747)-C(5))-methyltransferase RlmC of Xenorhabdus nematophila (strain ATCC 19061 / DSM 3370 / CCUG 14189 / LMG 1036 / NCIMB 9965 / AN6).